Consider the following 79-residue polypeptide: Ubiquinol-cytochrome c reductase complex assembly factor 5 (79 aa).

At 1-20 (MSPYSGSVRRLLDSWPGKKR) the chain is on the mitochondrial matrix side. Residues 21-43 (FGVYRFLPLFFLLGAGLEFSMIN) traverse the membrane as a helical segment. The Mitochondrial intermembrane segment spans residues 44-79 (WTVGETNFYRTFKRRQAKNYVEEQQHLQARAANNTN).

Belongs to the UQCC5 family. Interacts with respiratory complex III components Uqcc1 and RFeSP; the interactions are probably involved in the assembly and stability of the mitochondrial ubiquinol-cytochrome c reductase complex. Interacts with sloth2; the interaction stabilizes both components. Expressed in the brain.

The protein resides in the mitochondrion inner membrane. It is found in the mitochondrion. Required for the assembly and stability of the mitochondrial ubiquinol-cytochrome c reductase complex (complex III (CIII) or cytochrome b-c1 complex), a multisubunit transmembrane complex that is part of the mitochondrial electron transport chain (ETC) which drives oxidative phosphorylation. The sequence is that of Ubiquinol-cytochrome c reductase complex assembly factor 5 from Drosophila melanogaster (Fruit fly).